The following is a 429-amino-acid chain: 3-phosphoshikimate 1-carboxyvinyltransferase (429 aa).

Positions 23, 24, and 28 each coordinate 3-phosphoshikimate. Phosphoenolpyruvate is bound at residue Lys23. Residues Gly95 and Arg123 each coordinate phosphoenolpyruvate. Residues Ser168, Gln170, Asp316, and Lys343 each contribute to the 3-phosphoshikimate site. Phosphoenolpyruvate is bound at residue Gln170. Catalysis depends on Asp316, which acts as the Proton acceptor. 2 residues coordinate phosphoenolpyruvate: Arg347 and Arg389.

It belongs to the EPSP synthase family. In terms of assembly, monomer.

The protein resides in the cytoplasm. The enzyme catalyses 3-phosphoshikimate + phosphoenolpyruvate = 5-O-(1-carboxyvinyl)-3-phosphoshikimate + phosphate. Its pathway is metabolic intermediate biosynthesis; chorismate biosynthesis; chorismate from D-erythrose 4-phosphate and phosphoenolpyruvate: step 6/7. In terms of biological role, catalyzes the transfer of the enolpyruvyl moiety of phosphoenolpyruvate (PEP) to the 5-hydroxyl of shikimate-3-phosphate (S3P) to produce enolpyruvyl shikimate-3-phosphate and inorganic phosphate. The chain is 3-phosphoshikimate 1-carboxyvinyltransferase from Bacillus anthracis (strain A0248).